The primary structure comprises 163 residues: Peptidyl-prolyl cis-trans isomerase NIMA-interacting 1 (163 aa).

One can recognise a WW domain in the interval 5 to 39; the sequence is EKLPPGWEKRMSRSSGRVYYFNHITNASQWERPSG. The disordered stretch occupies residues 33 to 54; it reads QWERPSGNSSSGGKNGQGEPAR. Serine 43 is subject to Phosphoserine. Residue lysine 46 is modified to N6-acetyllysine. One can recognise a PpiC domain in the interval 52–163; that stretch reads PARVRCSHLL…SGIHIILRTE (112 aa). The residue at position 71 (serine 71) is a Phosphoserine; by DAPK1. The residue at position 108 (serine 108) is a Phosphoserine.

In terms of assembly, interacts with STIL. Interacts with KIF20B. Interacts with NEK6. Interacts (via WW domain) with PRKX. Interacts with BTK. Interacts (via PpiC domain) with DAPK1. Interacts with the phosphorylated form of RAF1. Interacts (via WW domain) with ATCAY; upon NGF stimulation. Interacts with PML (isoform PML-4). Interacts with BCL6. Interacts with FBXW7, disrupting FBXW7 dimerization and promoting FBXW7 autoubiquitination and degradation. Directly interacts with RBBP8/CtIP; this interaction depends upon RBBP8 phosphorylation. Interacts (via WW domain) with IRAK3/IRAK-M (when phosphorylated at 'Ser-110') in response to IL33-mediated (but not TLR4 ligand LPS) dendritic cell stimulation. Interacts with PGK1 (when phosphorylated at 'Ser-203'); the interaction is direct, occurs under hypoxic conditions, and targets PGK1 to the mitochondrion by promoting interactions with the TOM complex. In terms of processing, phosphorylation at Ser-71 by DAPK1 results in inhibition of its catalytic activity, nuclear localization, and its ability to induce centrosome amplification, chromosome instability and cell transformation. Ser-71 is dephosphorylated upon IL33-stimulation of dendritic cells. Expressed in immune cells in the lung (at protein level). The phosphorylated form at Ser-71 is expressed in normal breast tissue cells but not in breast cancer cells.

It localises to the nucleus. It is found in the nucleus speckle. The protein localises to the cytoplasm. The catalysed reaction is [protein]-peptidylproline (omega=180) = [protein]-peptidylproline (omega=0). Peptidyl-prolyl cis/trans isomerase (PPIase) that binds to and isomerizes specific phosphorylated Ser/Thr-Pro (pSer/Thr-Pro) motifs. By inducing conformational changes in a subset of phosphorylated proteins, acts as a molecular switch in multiple cellular processes. Displays a preference for acidic residues located N-terminally to the proline bond to be isomerized. Regulates mitosis presumably by interacting with NIMA and attenuating its mitosis-promoting activity. Down-regulates kinase activity of BTK. Can transactivate multiple oncogenes and induce centrosome amplification, chromosome instability and cell transformation. Required for the efficient dephosphorylation and recycling of RAF1 after mitogen activation. Binds and targets PML and BCL6 for degradation in a phosphorylation-dependent manner. Acts as a regulator of JNK cascade by binding to phosphorylated FBXW7, disrupting FBXW7 dimerization and promoting FBXW7 autoubiquitination and degradation: degradation of FBXW7 leads to subsequent stabilization of JUN. May facilitate the ubiquitination and proteasomal degradation of RBBP8/CtIP through CUL3/KLHL15 E3 ubiquitin-protein ligase complex, hence favors DNA double-strand repair through error-prone non-homologous end joining (NHEJ) over error-free, RBBP8-mediated homologous recombination (HR). Upon IL33-induced lung inflammation, catalyzes cis-trans isomerization of phosphorylated IRAK3/IRAK-M, inducing IRAK3 stabilization, nuclear translocation and expression of pro-inflammatory genes in dendritic cells. Catalyzes cis-trans isomerization of phosphorylated phosphoglycerate kinase PGK1 under hypoxic conditions to promote its binding to the TOM complex and targeting to the mitochondrion. The protein is Peptidyl-prolyl cis-trans isomerase NIMA-interacting 1 (PIN1) of Homo sapiens (Human).